The chain runs to 328 residues: Galactinol synthase 10 (328 aa).

Residue K106 is part of the active site. Mn(2+)-binding residues include D122, D124, and H248.

It belongs to the glycosyltransferase 8 family. Galactosyltransferase subfamily. The cofactor is a divalent metal cation.

It is found in the cytoplasm. The enzyme catalyses myo-inositol + UDP-alpha-D-galactose = alpha-D-galactosyl-(1-&gt;3)-1D-myo-inositol + UDP + H(+). Galactinol synthase involved in the biosynthesis of raffinose family oligosaccharides (RFOs) that function as osmoprotectants. May promote plant stress tolerance. The polypeptide is Galactinol synthase 10 (GOLS10) (Arabidopsis thaliana (Mouse-ear cress)).